The chain runs to 423 residues: Serine hydroxymethyltransferase 2 (423 aa).

Residues Leu121 and 125–127 (GHL) contribute to the (6S)-5,6,7,8-tetrahydrofolate site. Lys230 carries the post-translational modification N6-(pyridoxal phosphate)lysine. 356–358 (SPF) lines the (6S)-5,6,7,8-tetrahydrofolate pocket.

This sequence belongs to the SHMT family. In terms of assembly, homodimer. Requires pyridoxal 5'-phosphate as cofactor.

The protein resides in the cytoplasm. It carries out the reaction (6R)-5,10-methylene-5,6,7,8-tetrahydrofolate + glycine + H2O = (6S)-5,6,7,8-tetrahydrofolate + L-serine. Its pathway is one-carbon metabolism; tetrahydrofolate interconversion. It functions in the pathway amino-acid biosynthesis; glycine biosynthesis; glycine from L-serine: step 1/1. Its function is as follows. Catalyzes the reversible interconversion of serine and glycine with tetrahydrofolate (THF) serving as the one-carbon carrier. This reaction serves as the major source of one-carbon groups required for the biosynthesis of purines, thymidylate, methionine, and other important biomolecules. Also exhibits THF-independent aldolase activity toward beta-hydroxyamino acids, producing glycine and aldehydes, via a retro-aldol mechanism. In Pectobacterium atrosepticum (strain SCRI 1043 / ATCC BAA-672) (Erwinia carotovora subsp. atroseptica), this protein is Serine hydroxymethyltransferase 2.